Consider the following 408-residue polypeptide: Heparan-sulfate 6-O-sulfotransferase 1 (408 aa).

Topologically, residues M8 to K14 are cytoplasmic. A helical; Signal-anchor for type II membrane protein membrane pass occupies residues F15 to P35. At G36–W408 the chain is on the lumenal side. H90–T98 contacts 3'-phosphoadenylyl sulfate. Residues K120–K121, R137, W142, and H147 contribute to the substrate site. H147 functions as the Proton acceptor in the catalytic mechanism. Residues R182 and S190 each contribute to the 3'-phosphoadenylyl sulfate site. The substrate site is built by H194 and W201. The N-linked (GlcNAc...) asparagine glycan is linked to N261. Residue M314–Y316 coordinates 3'-phosphoadenylyl sulfate. The N-linked (GlcNAc...) asparagine glycan is linked to N317. R320–A321 is a 3'-phosphoadenylyl sulfate binding site. Residue N328 is glycosylated (N-linked (GlcNAc...) asparagine). Residues A348 to E382 are a coiled coil. The segment at L376–P396 is disordered.

The protein belongs to the sulfotransferase 6 family. N-glycosylated.

The protein localises to the membrane. It catalyses the reaction alpha-D-glucosaminyl-[heparan sulfate](n) + 3'-phosphoadenylyl sulfate = 6-sulfo-alpha-D-glucosaminyl-[heparan sulfate](n) + adenosine 3',5'-bisphosphate + H(+). Functionally, 6-O-sulfation enzyme which catalyzes the transfer of sulfate from 3'-phosphoadenosine 5'-phosphosulfate (PAPS) to position 6 of the N-sulfoglucosamine residue (GlcNS) of heparan sulfate. May also play a role in limb development. This Gallus gallus (Chicken) protein is Heparan-sulfate 6-O-sulfotransferase 1.